The sequence spans 501 residues: L-ornithine N(5)-monooxygenase (501 aa).

The interval 1-31 (MESVERKSESSYLGMRNMQPEQRLSLDPPRL) is disordered. Residues 83-91 (ERQKQFAWH) and Gln-102 each bind FAD. Lys-107 is a binding site for substrate. An FAD-binding site is contributed by Val-168. Residues 254–257 (SGQS) and Arg-279 contribute to the NADP(+) site. Substrate-binding positions include 293–296 (NEIF) and Asn-323. 323-325 (NYS) is an NADP(+) binding site. Residues 366-390 (EHHGPQSRMRIHLKSSKPESEGAAN) form a disordered region. Over residues 381–390 (SKPESEGAAN) the composition is skewed to basic and acidic residues. Residue 466 to 468 (SLL) coordinates FAD. Position 469 (Ser-469) interacts with substrate.

Belongs to the lysine N(6)-hydroxylase/L-ornithine N(5)-oxygenase family. Homotetramer. It depends on FAD as a cofactor.

The catalysed reaction is L-ornithine + NADPH + O2 = N(5)-hydroxy-L-ornithine + NADP(+) + H2O. The enzyme catalyses L-ornithine + NADH + O2 = N(5)-hydroxy-L-ornithine + NAD(+) + H2O. Its pathway is siderophore biosynthesis; ferrichrome biosynthesis. L-ornithine N(5)-monooxygenase; part of the siderophore biosynthetic pathway. Aspergillus fumigatus produces four types of siderophores, low-molecular-mass iron chelators, including excreted fusarinine C (FsC) and triacetylfusarinine C (TAFC) for iron uptake; and intacellular ferricrocin (FC) for hyphal and hydroxyferricrocin (HFC) for conidial iron distribution and storage. TAFC consists of three N(2)-acetyl-N(5)-anhydromevalonyl-N(5)-hydroxyornithine residues cyclically linked by ester bonds; FC is a cyclic hexapeptide with the structure Gly-Ser-Gly-(N(5)-acetyl-N(5)-hydroxyornithine)x3. The biosynthesis of all four siderophores depends on the hydroxylation of ornithine, catalyzed by the monooxygenase sidA. SidA is highly specific for its substrate, only hydrolyzing l-ornithine, and has preference for NADPH over NADH, NADPH playing a role in stabilization of the C4a-hydroperoxyflavin intermediate. Subsequently, the pathways for biosynthesis of extra- and intracellular siderophores split. For biosynthesis of extracellular siderophores, the transacylase sidF transfers anhydromevalonyl to N(5)-hydroxyornithine. The required anhydromevalonyl-CoA moiety is derived from mevalonate by CoA ligation and dehydration catalyzed by sidI and sidH respectively. The acetylation of N(5)-hydroxyornithine for FC biosynthesis involves the constitutively expressed sidL. FC is hydroxylated to HFC by an as yet uncharacterized enzyme during conidiation. Assembly of fusarinine C (FsC) and FC is catalyzed by two different nonribosomal peptide synthetases (NRPS), sidD and sidC respectively. Subsequently, sidG catalyzes N2-acetylation of FsC for forming TAFC. Both extra- and intracellular siderophores are crucial for growth during iron limitation and virulence. The protein is L-ornithine N(5)-monooxygenase of Aspergillus fumigatus (strain ATCC MYA-4609 / CBS 101355 / FGSC A1100 / Af293) (Neosartorya fumigata).